A 1121-amino-acid polypeptide reads, in one-letter code: Solute carrier family 38 member 10 (1121 aa).

The next 10 helical transmembrane spans lie at 4–24 (AAAS…GVSV), 36–58 (IVLG…MFLV), 84–104 (LVET…YVVI), 120–140 (VGGT…VLPL), 153–173 (FSAM…LSSL), 229–249 (IFAS…FFGY), 272–292 (MLRV…ILPC), 323–343 (ALTL…PNVE), 345–365 (ILGL…PALI), and 378–398 (VVLW…LSVS). Disordered regions lie at residues 434–691 (VVAV…EEAG), 731–904 (KEIH…AATG), and 965–1068 (ISDG…ELAP). Basic and acidic residues-rich tracts occupy residues 439 to 454 (EDGR…REEL), 466 to 475 (PGREDGKEAQ), 493 to 508 (EAHR…KVVV), and 544 to 559 (DSER…EVGK). Position 612 is a phosphoserine (Ser-612). Basic and acidic residues-rich tracts occupy residues 645–659 (DSDH…EEKP), 668–679 (EPREQRDVERAG), 731–752 (KEIH…EVHP), 763–773 (EAPEGKARETM), 802–811 (SLEHPERPVG), and 863–876 (PARE…RLAE). Thr-772 carries the post-translational modification Phosphothreonine. Ser-802 bears the Phosphoserine mark. Residues Ser-890 and Ser-966 each carry the phosphoserine modification. Residues 976–998 (HRLDHGGYLEMRKEARGGDHMPV) show a composition bias toward basic and acidic residues. Ser-999 is modified (phosphoserine). Composition is skewed to basic and acidic residues over residues 1035–1044 (DNAKPNRDLK) and 1057–1068 (DLGPHAEGELAP).

The protein belongs to the amino acid/polyamine transporter 2 family.

It localises to the membrane. The catalysed reaction is L-glutamate(out) = L-glutamate(in). It catalyses the reaction L-glutamine(out) = L-glutamine(in). The enzyme catalyses L-alanine(in) = L-alanine(out). It carries out the reaction L-serine(in) = L-serine(out). The catalysed reaction is L-leucine(in) = L-leucine(out). Functionally, facilitates bidirectional transport of amino acids. May act as a glutamate sensor that regulates glutamate-glutamine cycle and mTOR signaling in the brain. The transport mechanism remains to be elucidated. The protein is Solute carrier family 38 member 10 of Pongo abelii (Sumatran orangutan).